The following is a 1274-amino-acid chain: Mediator of RNA polymerase II transcription subunit 14 (1274 aa).

3 disordered regions span residues 1–40 (MENGHMNGVRTHHDRNSWTNGVNGGVAKREGSPDKGKAHA), 1056–1142 (LVGT…LHTQ), and 1155–1274 (AQRQ…VVID). Residues 27 to 37 (AKREGSPDKGK) are compositionally biased toward basic and acidic residues. Polar residues predominate over residues 1075-1085 (QDLQQGPQKTP). Over residues 1090–1104 (AAQAAQAAQAAQAAQ) the composition is skewed to low complexity. Residues 1108-1119 (PQRPKQQPPTPS) are compositionally biased toward pro residues. Composition is skewed to low complexity over residues 1120–1142 (QPQQQHRNVNQPQAQAQPQLHTQ), 1155–1172 (AQRQAQARANNSSNNNNT), and 1183–1252 (PQQR…PQGQ). Over residues 1253-1265 (PGHGGGANGGMGG) the composition is skewed to gly residues.

This sequence belongs to the Mediator complex subunit 14 family. In terms of assembly, component of the Mediator complex.

The protein resides in the nucleus. In terms of biological role, component of the Mediator complex, a coactivator involved in the regulated transcription of nearly all RNA polymerase II-dependent genes. Mediator functions as a bridge to convey information from gene-specific regulatory proteins to the basal RNA polymerase II transcription machinery. Mediator is recruited to promoters by direct interactions with regulatory proteins and serves as a scaffold for the assembly of a functional preinitiation complex with RNA polymerase II and the general transcription factors. The chain is Mediator of RNA polymerase II transcription subunit 14 (rgr1) from Neurospora crassa (strain ATCC 24698 / 74-OR23-1A / CBS 708.71 / DSM 1257 / FGSC 987).